The chain runs to 598 residues: Kinesin-like protein klp-3 (598 aa).

2 coiled-coil regions span residues E19–G66 and G89–D118. A disordered region spans residues A133–I155. Over residues R136–P150 the composition is skewed to polar residues. Positions H170–V248 form a coiled coil. The region spanning N245–V565 is the Kinesin motor domain. G328–T335 is an ATP binding site. The interval S569–K598 is disordered.

The protein belongs to the TRAFAC class myosin-kinesin ATPase superfamily. Kinesin family.

It localises to the cytoplasm. The protein localises to the cytoskeleton. In Caenorhabditis elegans, this protein is Kinesin-like protein klp-3 (klp-3).